Consider the following 219-residue polypeptide: Protein-L-isoaspartate O-methyltransferase (219 aa).

Residue Ser-66 is part of the active site.

The protein belongs to the methyltransferase superfamily. L-isoaspartyl/D-aspartyl protein methyltransferase family.

It is found in the cytoplasm. The enzyme catalyses [protein]-L-isoaspartate + S-adenosyl-L-methionine = [protein]-L-isoaspartate alpha-methyl ester + S-adenosyl-L-homocysteine. Its function is as follows. Catalyzes the methyl esterification of L-isoaspartyl residues in peptides and proteins that result from spontaneous decomposition of normal L-aspartyl and L-asparaginyl residues. It plays a role in the repair and/or degradation of damaged proteins. This chain is Protein-L-isoaspartate O-methyltransferase, found in Xanthobacter autotrophicus (strain ATCC BAA-1158 / Py2).